The primary structure comprises 627 residues: (-)-beta-pinene synthase 1, chloroplastic (627 aa).

The N-terminal 50 residues, 1–50 (MDLISVLPSTSKSCVCLHKPLSSSTHKLKPFCRTIRILGMPRPRKSVLMA), are a transit peptide targeting the chloroplast. Positions 378, 382, and 530 each coordinate Mg(2+). Positions 378-382 (DDMYD) match the DDXXD motif motif.

The protein belongs to the terpene synthase family. Tpsd subfamily. Mg(2+) serves as cofactor. The cofactor is Mn(2+).

It is found in the plastid. It localises to the chloroplast. The enzyme catalyses (2E)-geranyl diphosphate = (1S,5S)-beta-pinene + diphosphate. The catalysed reaction is (2E)-geranyl diphosphate = (1S,5S)-alpha-pinene + diphosphate. Its pathway is terpene metabolism; oleoresin biosynthesis. The protein operates within secondary metabolite biosynthesis; terpenoid biosynthesis. Its function is as follows. Monoterpene synthase (TPS) involved in the biosynthesis of monoterpene natural products included in conifer oleoresin secretions and volatile emissions; these compounds contribute to biotic and abiotic stress defense against herbivores and pathogens. Catalyzes the conversion of (2E)-geranyl diphosphate (GPP) to (-)-beta-pinene and, to a lower extent, to (-)-alpha-pinene. The polypeptide is (-)-beta-pinene synthase 1, chloroplastic (Pinus contorta (Shore pine)).